We begin with the raw amino-acid sequence, 229 residues long: Translation initiation factor 6 (229 aa).

Belongs to the eIF-6 family.

In terms of biological role, binds to the 50S ribosomal subunit and prevents its association with the 30S ribosomal subunit to form the 70S initiation complex. The polypeptide is Translation initiation factor 6 (Thermococcus kodakarensis (strain ATCC BAA-918 / JCM 12380 / KOD1) (Pyrococcus kodakaraensis (strain KOD1))).